A 690-amino-acid polypeptide reads, in one-letter code: Eukaryotic translation initiation factor 3 subunit B (690 aa).

Basic and acidic residues predominate over residues 1–11; sequence MAKKKSEDHSG. The segment at 1–33 is disordered; sequence MAKKKSEDHSGADANDSDYNEEPNFDDPPNFVD. The segment covering 15–25 has biased composition (acidic residues); it reads NDSDYNEEPNF. The RRM domain maps to 57–141; the sequence is SVVVVDNMPK…YTFAVNLFTD (85 aa). WD repeat units lie at residues 207–246, 292–331, 334–369, 442–484, and 530–575; these read TRER…KIQK, GDGM…LLDL, IKIP…TLMK, EIRE…KPSL, and PDHF…IKRT. Residues 613-646 adopt a coiled-coil conformation; that stretch reads EQKDRLRLTRASKELLEKRAQLRETFMEYRNKRI.

The protein belongs to the eIF-3 subunit B family. As to quaternary structure, component of the eukaryotic translation initiation factor 3 (eIF-3) complex. The eIF-3 complex interacts with pix. Interacts with mxt.

It is found in the cytoplasm. Its function is as follows. RNA-binding component of the eukaryotic translation initiation factor 3 (eIF-3) complex, which is involved in protein synthesis of a specialized repertoire of mRNAs and, together with other initiation factors, stimulates binding of mRNA and methionyl-tRNAi to the 40S ribosome. The eIF-3 complex specifically targets and initiates translation of a subset of mRNAs involved in cell proliferation. In Drosophila grimshawi (Hawaiian fruit fly), this protein is Eukaryotic translation initiation factor 3 subunit B.